Here is a 472-residue protein sequence, read N- to C-terminus: Glutamate--tRNA ligase (472 aa).

The short motif at 10-20 (PSPTGYLHVGG) is the 'HIGH' region element. Residues Cys99, Cys101, Cys126, and His128 each coordinate Zn(2+). A 'KMSKS' region motif is present at residues 238-242 (KLSKR). Residue Lys241 coordinates ATP.

It belongs to the class-I aminoacyl-tRNA synthetase family. Glutamate--tRNA ligase type 1 subfamily. In terms of assembly, monomer. Requires Zn(2+) as cofactor.

The protein resides in the cytoplasm. It carries out the reaction tRNA(Glu) + L-glutamate + ATP = L-glutamyl-tRNA(Glu) + AMP + diphosphate. Functionally, catalyzes the attachment of glutamate to tRNA(Glu) in a two-step reaction: glutamate is first activated by ATP to form Glu-AMP and then transferred to the acceptor end of tRNA(Glu). This Proteus mirabilis (strain HI4320) protein is Glutamate--tRNA ligase.